We begin with the raw amino-acid sequence, 642 residues long: Pentatricopeptide repeat-containing protein At3g16010 (642 aa).

14 PPR repeats span residues 125–159 (DCST…TYVS), 161–195 (SPAV…KCKP), 196–230 (TSST…GDCF), 232–266 (DTIT…CMQP), 267–301 (TEKI…GCSP), 302–336 (TVYT…GLTP), 337–371 (DVVF…RCTP), 372–407 (TVVS…SVSP), 408–442 (SEFT…GFPP), 443–473 (CPAA…LKEN), 478–512 (SSRV…GSGP), 513–547 (DVYA…GCRA), 548–582 (DINS…GIKP), and 583–617 (DGVT…GFEY).

Belongs to the PPR family. P subfamily.

This is Pentatricopeptide repeat-containing protein At3g16010 from Arabidopsis thaliana (Mouse-ear cress).